The primary structure comprises 354 residues: GDSL esterase/lipase At3g09930 (354 aa).

A signal peptide spans 1-24 (MELPKLLISLFLFSFSSFFLGAES). The Nucleophile role is filled by Ser-46. N-linked (GlcNAc...) asparagine glycosylation is found at Asn-133, Asn-233, Asn-237, Asn-256, and Asn-300. Catalysis depends on residues Asp-329 and His-332.

It belongs to the 'GDSL' lipolytic enzyme family.

Its subcellular location is the secreted. This is GDSL esterase/lipase At3g09930 from Arabidopsis thaliana (Mouse-ear cress).